The sequence spans 123 residues: UPF0382 membrane protein YwdK (123 aa).

A run of 4 helical transmembrane segments spans residues 3-23, 49-69, 71-91, and 96-116; these read VFII…AFGA, ALGL…GSVT, AGWL…ILSV, and ILGA…IMIV.

The protein belongs to the UPF0382 family.

It localises to the cell membrane. The protein is UPF0382 membrane protein YwdK (ywdK) of Bacillus subtilis (strain 168).